The sequence spans 940 residues: Valine--tRNA ligase (940 aa).

The short motif at proline 47 to histidine 57 is the 'HIGH' region element. The short motif at lysine 564–serine 568 is the 'KMSKS' region element. Residue lysine 567 coordinates ATP. Positions proline 872–serine 938 form a coiled coil.

The protein belongs to the class-I aminoacyl-tRNA synthetase family. ValS type 1 subfamily. Monomer.

The protein localises to the cytoplasm. The catalysed reaction is tRNA(Val) + L-valine + ATP = L-valyl-tRNA(Val) + AMP + diphosphate. Its function is as follows. Catalyzes the attachment of valine to tRNA(Val). As ValRS can inadvertently accommodate and process structurally similar amino acids such as threonine, to avoid such errors, it has a 'posttransfer' editing activity that hydrolyzes mischarged Thr-tRNA(Val) in a tRNA-dependent manner. This Chlamydia caviae (strain ATCC VR-813 / DSM 19441 / 03DC25 / GPIC) (Chlamydophila caviae) protein is Valine--tRNA ligase.